The chain runs to 186 residues: Elongation factor P (186 aa).

This sequence belongs to the elongation factor P family.

The protein resides in the cytoplasm. Its pathway is protein biosynthesis; polypeptide chain elongation. In terms of biological role, involved in peptide bond synthesis. Stimulates efficient translation and peptide-bond synthesis on native or reconstituted 70S ribosomes in vitro. Probably functions indirectly by altering the affinity of the ribosome for aminoacyl-tRNA, thus increasing their reactivity as acceptors for peptidyl transferase. The polypeptide is Elongation factor P (Prochlorococcus marinus (strain MIT 9303)).